The chain runs to 669 residues: UvrABC system protein C (669 aa).

The GIY-YIG domain occupies 14 to 91 (DSPGCYLHKD…IQRYKPKYNI (78 aa)). The UVR domain maps to 196–231 (KKIVKELEGKMISASDNMEFEQAAEYRDVIKAIGTL). The interval 647 to 669 (PHKSDENWESIKDNVPLLKSEKS) is disordered. Basic and acidic residues predominate over residues 648–658 (HKSDENWESIK).

This sequence belongs to the UvrC family. Interacts with UvrB in an incision complex.

It localises to the cytoplasm. The UvrABC repair system catalyzes the recognition and processing of DNA lesions. UvrC both incises the 5' and 3' sides of the lesion. The N-terminal half is responsible for the 3' incision and the C-terminal half is responsible for the 5' incision. This Lactococcus lactis subsp. cremoris (strain MG1363) protein is UvrABC system protein C.